Here is a 76-residue protein sequence, read N- to C-terminus: Zinc finger protein 706 (76 aa).

Positions 1–13 (MARGQQKIQSQQK) are enriched in low complexity. Disordered stretches follow at residues 1-32 (MARGQQKIQSQQKNAKKQAGQKKKQGHDQKAA) and 53-76 (TFKQHFESKHPKTPLPPELADVQA). A compositionally biased stretch (basic residues) spans 14 to 25 (NAKKQAGQKKKQ). The C2H2-type zinc-finger motif lies at 39-62 (YTCTVCRTQMPDPKTFKQHFESKH). The span at 53-62 (TFKQHFESKH) shows a compositional bias: basic and acidic residues.

It localises to the cytoplasm. Its subcellular location is the nucleus. Its function is as follows. Transcription repressor involved in the exit of embryonic stem cells (ESCs) from self-renewal. Acts by repressing expression of KLF4. The chain is Zinc finger protein 706 from Homo sapiens (Human).